Here is a 71-residue protein sequence, read N- to C-terminus: DNA gyrase inhibitor YacG (71 aa).

Positions 8, 11, 27, and 31 each coordinate Zn(2+). The tract at residues 48-71 (VVEDDDLPPDAPGGESGGASGRLN) is disordered. The span at 61–71 (GESGGASGRLN) shows a compositional bias: gly residues.

The protein belongs to the DNA gyrase inhibitor YacG family. Interacts with GyrB. The cofactor is Zn(2+).

Functionally, inhibits all the catalytic activities of DNA gyrase by preventing its interaction with DNA. Acts by binding directly to the C-terminal domain of GyrB, which probably disrupts DNA binding by the gyrase. In Ralstonia nicotianae (strain ATCC BAA-1114 / GMI1000) (Ralstonia solanacearum), this protein is DNA gyrase inhibitor YacG.